A 631-amino-acid polypeptide reads, in one-letter code: RING finger protein 112 (631 aa).

An RING-type zinc finger spans residues 57 to 98 (CSICLERLREPISLDCGHDFCIRCFSTHRIPGCELPCCPECR). The interaction with ZBTB16 stretch occupies residues 131-631 (AVRAERLLLV…GDREPLLQEE (501 aa)). Residues 166–397 (DTPVCLLAVL…YISDVLSTAP (232 aa)) enclose the GB1/RHD3-type G domain. Residue 317 to 318 (RD) participates in GTP binding. 2 helical membrane passes run 547–567 (LAAV…GVVG) and 580–600 (GMVA…GGGV).

Belongs to the TRAFAC class dynamin-like GTPase superfamily. GB1/RHD3 GTPase family. GB1 subfamily. In terms of assembly, self-associates. Interacts with SP1 in an oxidative stress-regulated manner. Interacts with SIGMAR1 in an oxidative stress-regulated manner. Interacts with ZBTB16 (via C2H2-type zinc finger domains 1 and 2). In terms of processing, auto-ubiquitinated. Predominantly expressed in brain.

It is found in the membrane. The protein localises to the cytoplasm. Its subcellular location is the nucleus. The protein resides in the nuclear body. It localises to the nucleoplasm. It is found in the endosome. The protein localises to the cytoplasmic vesicle. Its subcellular location is the secretory vesicle. The protein resides in the synaptic vesicle. It localises to the postsynaptic density. It is found in the perikaryon. The protein localises to the cell projection. Its subcellular location is the neuron projection. The catalysed reaction is S-ubiquitinyl-[E2 ubiquitin-conjugating enzyme]-L-cysteine + [acceptor protein]-L-lysine = [E2 ubiquitin-conjugating enzyme]-L-cysteine + N(6)-ubiquitinyl-[acceptor protein]-L-lysine.. The protein operates within protein modification; protein ubiquitination. Its function is as follows. E3 ubiquitin-protein ligase that plays an important role in neuronal differentiation, including neurogenesis and gliogenesis, during brain development. During embryonic development initiates neuronal differentiation by inducing cell cycle arrest at the G0/G1 phase through up-regulation of cell-cycle regulatory proteins. Plays a role not only in the fetal period during the development of the nervous system, but also in the adult brain, where it is involved in the maintenance of neural functions and protection of the nervous tissue cells from oxidative stress-induced damage. Exhibits GTPase and E3 ubiquitin-protein ligase activities. Regulates dendritic spine density and synaptic neurotransmission; its ability to hydrolyze GTP is involved in the maintenance of dendritic spine density. This Rattus norvegicus (Rat) protein is RING finger protein 112 (Rnf112).